Here is a 401-residue protein sequence, read N- to C-terminus: L-rhamnonate dehydratase (401 aa).

His29 and Arg55 together coordinate substrate. Residues Asp222, Glu248, and Glu276 each contribute to the Mg(2+) site. The active-site Proton acceptor is His325. A substrate-binding site is contributed by Glu345.

Belongs to the mandelate racemase/muconate lactonizing enzyme family. RhamD subfamily. As to quaternary structure, homooctamer; tetramer of dimers. Mg(2+) serves as cofactor.

The catalysed reaction is L-rhamnonate = 2-dehydro-3-deoxy-L-rhamnonate + H2O. Its function is as follows. Catalyzes the dehydration of L-rhamnonate to 2-keto-3-deoxy-L-rhamnonate (KDR). The chain is L-rhamnonate dehydratase from Tolumonas auensis (strain DSM 9187 / NBRC 110442 / TA 4).